Reading from the N-terminus, the 258-residue chain is Glutathione S-transferase DHAR3, chloroplastic (258 aa).

Residues 1–42 constitute a chloroplast transit peptide; sequence MISLRFQPSTTAGVLSASVSRAGFIKRCGSTKPGRVGRFVTM. An S-glutathionyl cysteine modification is found at Cys52. Glutathione contacts are provided by Lys54 and Asp65. Residues Lys54 and Asp65 each contribute to the L-ascorbate site. The GST N-terminal domain occupies 56 to 129; that stretch reads SITTPNKLGD…DVITQALEEK (74 aa). The active-site Nucleophile is the Cys66. A disulfide bridge connects residues Cys66 and Cys69. Positions 66-71 match the Glutathione-binding motif; the sequence is CPFCQK. Positions 93, 106, 119, 205, and 252 each coordinate glutathione. Positions 130-258 constitute a GST C-terminal domain; the sequence is YPEPPLATPP…IAGWRPKVMG (129 aa). L-ascorbate is bound at residue Lys255.

It belongs to the GST superfamily. DHAR family. As to quaternary structure, monomer. Interacts with TRX3. Post-translationally, partial S-glutathionylation and intramolecular disulfide bond formation between Cys-66 and Cys-69 in the presence of oxidized glutathione (GSSG). Could be reduced by TRX-dependent process.

The protein resides in the plastid. The protein localises to the chloroplast stroma. The catalysed reaction is RX + glutathione = an S-substituted glutathione + a halide anion + H(+). The enzyme catalyses L-dehydroascorbate + 2 glutathione = glutathione disulfide + L-ascorbate. Displays a dual function. As a soluble protein, exhibits glutathione-dependent thiol transferase and dehydroascorbate (DHA) reductase activities. Key component of the ascorbate recycling system. Involved in the redox homeostasis, especially in scavenging of ROS under oxidative stresses. The sequence is that of Glutathione S-transferase DHAR3, chloroplastic (DHAR3) from Arabidopsis thaliana (Mouse-ear cress).